The primary structure comprises 100 residues: NADH-quinone oxidoreductase subunit K 2 (100 aa).

The next 3 helical transmembrane spans lie at 4 to 24 (LWWHISLGVALFVIGAAGVLL), 28 to 48 (ILVVLMSLELLLNSVNINFIA), and 60 to 80 (IFAIFVIAITAAEVAVALGIL).

Belongs to the complex I subunit 4L family. As to quaternary structure, NDH-1 is composed of 14 different subunits. Subunits NuoA, H, J, K, L, M, N constitute the membrane sector of the complex.

Its subcellular location is the cell inner membrane. It carries out the reaction a quinone + NADH + 5 H(+)(in) = a quinol + NAD(+) + 4 H(+)(out). In terms of biological role, NDH-1 shuttles electrons from NADH, via FMN and iron-sulfur (Fe-S) centers, to quinones in the respiratory chain. The immediate electron acceptor for the enzyme in this species is believed to be ubiquinone. Couples the redox reaction to proton translocation (for every two electrons transferred, four hydrogen ions are translocated across the cytoplasmic membrane), and thus conserves the redox energy in a proton gradient. The sequence is that of NADH-quinone oxidoreductase subunit K 2 from Sinorhizobium fredii (strain NBRC 101917 / NGR234).